The chain runs to 410 residues: Probable protein S-acyltransferase 6 (410 aa).

2 helical membrane passes run 45–65 and 76–96; these read LGLT…FVAS and GVSI…LLML. The disordered stretch occupies residues 108 to 129; that stretch reads NSHPPEPEVVDGNTGSGTSQTP. Positions 147 to 197 constitute a DHHC domain; sequence KYCDTCMLYRPPRCSHCSICNNCVERFDHHCPWVGQCIAQRNYRFFFMFVF. The active-site S-palmitoyl cysteine intermediate is the C177. The next 2 membrane-spanning stretches (helical) occupy residues 191–211 and 235–255; these read FFFM…AFCC and SIAL…LTCF. Residue S325 is modified to Phosphoserine.

The protein belongs to the DHHC palmitoyltransferase family.

The protein resides in the cell membrane. The catalysed reaction is L-cysteinyl-[protein] + hexadecanoyl-CoA = S-hexadecanoyl-L-cysteinyl-[protein] + CoA. Functionally, palmitoyl acyltransferase. The sequence is that of Probable protein S-acyltransferase 6 (PAT06) from Arabidopsis thaliana (Mouse-ear cress).